The sequence spans 316 residues: MTSKNPIQKALYLTFERAQWSELRDSVPLTLSERDLENLRGINEKVSLSEVTDIYLPLSRLLNLIVKSKQQRGLVLDEFLGQKPFHSPYIISIAGSVAVGKSTTARVLQALLQHWPEHPKVDLVTTDGFLYPLADLKRKGLLQRKGFPESYDMKMLVEFISAVKSGQPHTKAPIYSHVTYDRVRNQHQIVSQPDILILEGLNVLQTGLDSPVDTRRPFVSDFVDFSIYVDAEESLLKQWYQERFLQFRKGAFSDAKSYFHHYANLTDDEANAIAANIWDTINGPNLQLNIQPTRERAHLILQKGQDHLMSHVLMRK.

95–102 contacts ATP; sequence GSVAVGKS.

The protein belongs to the prokaryotic pantothenate kinase family.

The protein localises to the cytoplasm. The enzyme catalyses (R)-pantothenate + ATP = (R)-4'-phosphopantothenate + ADP + H(+). It functions in the pathway cofactor biosynthesis; coenzyme A biosynthesis; CoA from (R)-pantothenate: step 1/5. The sequence is that of Pantothenate kinase from Shewanella putrefaciens (strain CN-32 / ATCC BAA-453).